The following is a 258-amino-acid chain: UPF0758 protein BamMC406_2419 (258 aa).

The interval 13–42 (CRDPADAPAAPARHTGPARPRKRRPRNWKP) is disordered. A compositionally biased stretch (basic residues) spans 31 to 42 (RPRKRRPRNWKP). The region spanning 136-258 (QIDSPGAVED…TFSFARAGWL (123 aa)) is the MPN domain. Residues His-207, His-209, and Asp-220 each coordinate Zn(2+). A JAMM motif motif is present at residues 207-220 (HNHPSGAVQPSAED).

This sequence belongs to the UPF0758 family.

In Burkholderia ambifaria (strain MC40-6), this protein is UPF0758 protein BamMC406_2419.